We begin with the raw amino-acid sequence, 306 residues long: Porphobilinogen deaminase (306 aa).

C240 is subject to S-(dipyrrolylmethanemethyl)cysteine.

The protein belongs to the HMBS family. Monomer. Requires dipyrromethane as cofactor.

The enzyme catalyses 4 porphobilinogen + H2O = hydroxymethylbilane + 4 NH4(+). The protein operates within porphyrin-containing compound metabolism; protoporphyrin-IX biosynthesis; coproporphyrinogen-III from 5-aminolevulinate: step 2/4. Its function is as follows. Tetrapolymerization of the monopyrrole PBG into the hydroxymethylbilane pre-uroporphyrinogen in several discrete steps. This Syntrophomonas wolfei subsp. wolfei (strain DSM 2245B / Goettingen) protein is Porphobilinogen deaminase.